The chain runs to 229 residues: 7-cyano-7-deazaguanine synthase (229 aa).

Residue 7–17 (LSGGLDSSTIL) participates in ATP binding. The Zn(2+) site is built by cysteine 191, cysteine 199, cysteine 202, and cysteine 205.

This sequence belongs to the QueC family. Requires Zn(2+) as cofactor.

The catalysed reaction is 7-carboxy-7-deazaguanine + NH4(+) + ATP = 7-cyano-7-deazaguanine + ADP + phosphate + H2O + H(+). It participates in purine metabolism; 7-cyano-7-deazaguanine biosynthesis. Functionally, catalyzes the ATP-dependent conversion of 7-carboxy-7-deazaguanine (CDG) to 7-cyano-7-deazaguanine (preQ(0)). This chain is 7-cyano-7-deazaguanine synthase, found in Nostoc sp. (strain PCC 7120 / SAG 25.82 / UTEX 2576).